A 430-amino-acid chain; its full sequence is Aspartate aminotransferase, mitochondrial (430 aa).

The transit peptide at 1–29 (MALLHSGRFLSGVAAAFHPGLAAAASARA) directs the protein to the mitochondrion. T48 carries the phosphothreonine modification. Position 59 is an N6-acetyllysine (K59). Residue G65 coordinates substrate. The residue at position 73 (K73) is an N6-acetyllysine; alternate. The residue at position 73 (K73) is an N6-succinyllysine; alternate. Residue K82 is modified to N6-acetyllysine. K90 carries the N6-acetyllysine; alternate modification. K90 bears the N6-succinyllysine; alternate mark. Residue Y96 is modified to 3'-nitrotyrosine; alternate. Y96 carries the post-translational modification Phosphotyrosine; alternate. 2 positions are modified to N6-acetyllysine; alternate: K107 and K122. N6-succinyllysine; alternate is present on residues K107 and K122. S143 carries the phosphoserine modification. K159 carries the N6-acetyllysine; alternate modification. The residue at position 159 (K159) is an N6-succinyllysine; alternate. Position 162 (W162) interacts with substrate. At K185 the chain carries N6-acetyllysine; alternate. K185 carries the N6-succinyllysine; alternate modification. N215 serves as a coordination point for substrate. Residue K227 is modified to N6-succinyllysine. At K234 the chain carries N6-acetyllysine. N6-acetyllysine; alternate is present on residues K279 and K296. Position 279 is an N6-(pyridoxal phosphate)lysine; alternate (K279). N6-succinyllysine; alternate is present on K296. Residue K302 is modified to N6-acetyllysine. An N6-acetyllysine; alternate modification is found at K309. K309 is modified (N6-succinyllysine; alternate). R313 carries the post-translational modification Asymmetric dimethylarginine. K338 is subject to N6-acetyllysine; alternate. Position 338 is an N6-succinyllysine; alternate (K338). The residue at position 345 (K345) is an N6-acetyllysine. K363 is subject to N6-acetyllysine; alternate. Residue K363 is modified to N6-succinyllysine; alternate. An N6-acetyllysine mark is found at K364 and K387. K396 and K404 each carry N6-acetyllysine; alternate. K396 and K404 each carry N6-succinyllysine; alternate. R407 is a substrate binding site.

This sequence belongs to the class-I pyridoxal-phosphate-dependent aminotransferase family. In terms of assembly, homodimer. The cofactor is pyridoxal 5'-phosphate.

The protein resides in the mitochondrion matrix. It localises to the cell membrane. It catalyses the reaction L-aspartate + 2-oxoglutarate = oxaloacetate + L-glutamate. The catalysed reaction is L-kynurenine + 2-oxoglutarate = 4-(2-aminophenyl)-2,4-dioxobutanoate + L-glutamate. Functionally, catalyzes the irreversible transamination of the L-tryptophan metabolite L-kynurenine to form kynurenic acid (KA). As a member of the malate-aspartate shuttle, it has a key role in the intracellular NAD(H) redox balance. Is important for metabolite exchange between mitochondria and cytosol, and for amino acid metabolism. Facilitates cellular uptake of long-chain free fatty acids. This is Aspartate aminotransferase, mitochondrial (GOT2) from Bos taurus (Bovine).